Here is a 681-residue protein sequence, read N- to C-terminus: Mitosis inhibitor nif1 (681 aa).

Positions 22–43 (LNKKDGNDDDKAEHSKRSGYHG) are disordered. The span at 23–37 (NKKDGNDDDKAEHSK) shows a compositional bias: basic and acidic residues. Position 70 is a phosphoserine (S70). Disordered regions lie at residues 80–104 (TTSG…SSPF) and 182–324 (YYHE…SSRQ). Residues 92 to 103 (ESPASPAEASSP) are compositionally biased toward low complexity. Polar residues predominate over residues 191 to 203 (TASNTSPTPNSIK). S196 is subject to Phosphoserine. The segment covering 238-278 (SSGDSTPLSGSSSSKGMLMSMSTSENHSLSSNPELSNSNLL) has biased composition (low complexity). Residues 296–306 (SSKEPDKEHST) show a composition bias toward basic and acidic residues. Sel1-like repeat units follow at residues 547-582 (ALIL…AWGD) and 583-618 (ADAQ…FQGI).

The protein resides in the cytoplasm. Its function is as follows. Functions as a negative regulator of mitosis. It interacts with the C-terminal of nim1, thereby inhibiting its kinase activity which phosphorylates wee1. This is Mitosis inhibitor nif1 (nif1) from Schizosaccharomyces pombe (strain 972 / ATCC 24843) (Fission yeast).